A 122-amino-acid chain; its full sequence is Basic phospholipase A2 CbII (122 aa).

Intrachain disulfides connect cysteine 26-cysteine 115, cysteine 28-cysteine 44, cysteine 43-cysteine 95, cysteine 49-cysteine 122, cysteine 50-cysteine 88, cysteine 57-cysteine 81, and cysteine 75-cysteine 86. Ca(2+) is bound by residues tyrosine 27, glycine 29, and glycine 31. Histidine 47 is an active-site residue. Aspartate 48 is a Ca(2+) binding site. Aspartate 89 is an active-site residue.

It belongs to the phospholipase A2 family. Group I subfamily. D49 sub-subfamily. In terms of assembly, heterodimer of an acidic subunit (CbIalpha or CbIbeta) and a basic subunit (CbII). The acidic subunit is non-toxic, and increases the toxicity of the basic subunit. Requires Ca(2+) as cofactor. Expressed by the venom gland.

It is found in the secreted. It carries out the reaction a 1,2-diacyl-sn-glycero-3-phosphocholine + H2O = a 1-acyl-sn-glycero-3-phosphocholine + a fatty acid + H(+). Its function is as follows. Heterodimer: presynaptic neurotoxin. Monomer: Snake venom phospholipase A2 (PLA2) that exhibits strong anticoagulant effects by binding to factor Xa (F10) and inhibiting the prothrombinase activity (IC(50) is 20 nM). PLA2 catalyzes the calcium-dependent hydrolysis of the 2-acyl groups in 3-sn-phosphoglycerides. The sequence is that of Basic phospholipase A2 CbII from Pseudocerastes fieldi (Field's horned viper).